A 145-amino-acid chain; its full sequence is Ribosome maturation factor RimP (145 aa).

It belongs to the RimP family.

It localises to the cytoplasm. Functionally, required for maturation of 30S ribosomal subunits. In Borreliella burgdorferi (strain ZS7) (Borrelia burgdorferi), this protein is Ribosome maturation factor RimP.